The following is an 800-amino-acid chain: MSLVYLLIAILVIMAMILLMSKRRALAKYAGYIALVAPVISSIYFLIQIPSVAKLQYLSTSIPWIKTLDINLDLRLDGLSLMFSLIISLIGIAVFFYATQYLSSRKDNLPRFYFYLTLFMFSMIGIVLSDNTILMYIFWELTSVSSFLLISYWYNNGDSQFGAIQSFMITVFGGLALLVGFIMLYIMTGTNNITEILGQADHIKNHGLFIPMIFMFLLGAFTKSAQFPFHIWLPRAMAAPTPVSAYLHSATMVKAGIFLLLRFTPLLGLSNMYVYIVTFVGLITMLFGSITALKQWDLKGILAYSTISQLGMIMAMVGIGGGYAQHQQDAIASIYVFVLFGALFHLMNHAIFKCALFMGVGILDHEAGSRDIRILSGMRQLFPKMNLVMTIAALSMAGVPFLNGFLSKEMFLDALTQTGQLSQFSLISMIAIVFVGVIASVFTFTYALYMVKEVFWTKYDSKVFTKKNIHEPWLFSLPSLILMVLVPVIFFVPNIFGKGIIVLALRAVSGGNHQIDQLAPHVSQWHGFNIPLLLTIIIILLGSVLAIKVDWKKVFTGKIRQISVSKSYEMVYRHFEKFATKRFKRVMQDRLNQYIIMTLGIFMIIIGYGYIRIGLPKVHQLHVSEFGALEIILAIVTVTIGISLIFIRQRLTMVILNGVIGFVVTLFFIAMKAPDLALTQLVVETITTILFIVSFSRLPNVPRSNANKKREIIKISVSLLMALIVVSLIFITQQTDGLSSISDFYLKADKLTGGKNIVNAILGDFRALDTLFEGLVLIITGLGIYTLLNYQDRRGQDERE.

A run of 20 helical transmembrane segments spans residues M1–S21, I33–A53, G78–A98, L118–F138, F167–M187, G207–F227, T241–L261, Y273–L293, G300–G320, I331–I351, L387–S407, F424–F444, P472–V492, G527–I547, I595–L615, G627–I647, L651–M671, L676–S696, I712–T732, and L768–L788.

This sequence belongs to the CPA3 antiporters (TC 2.A.63) subunit A family. May form a heterooligomeric complex that consists of seven subunits: mnhA2, mnhB2, mnhC2, mnhD2, mnhE2, mnhF2 and mnhG2.

Its subcellular location is the cell membrane. The protein is Putative antiporter subunit mnhA2 (mnhA2) of Staphylococcus aureus (strain USA300).